A 157-amino-acid polypeptide reads, in one-letter code: Small ribosomal subunit protein bS6 (157 aa).

Residues 96–151 show a composition bias toward basic and acidic residues; it reads HEEGPSAMMRKADRDRDRDERGGGGFRGDREGGFRGDREGGGFRGDRGPRRPRDDA. The tract at residues 96-157 is disordered; that stretch reads HEEGPSAMMR…RDDAPAATEE (62 aa).

The protein belongs to the bacterial ribosomal protein bS6 family.

Binds together with bS18 to 16S ribosomal RNA. This chain is Small ribosomal subunit protein bS6, found in Rhodopseudomonas palustris (strain BisA53).